The primary structure comprises 220 residues: Ribosomal RNA large subunit methyltransferase E (220 aa).

Positions 1 to 10 are enriched in basic and acidic residues; that stretch reads MSRSGKDPGK. The tract at residues 1 to 24 is disordered; that stretch reads MSRSGKDPGKRVKTARKRSASSTR. Residues Gly75, Trp77, Asp94, Asp110, and Asp134 each contribute to the S-adenosyl-L-methionine site. The active-site Proton acceptor is the Lys174.

This sequence belongs to the class I-like SAM-binding methyltransferase superfamily. RNA methyltransferase RlmE family.

It is found in the cytoplasm. It catalyses the reaction uridine(2552) in 23S rRNA + S-adenosyl-L-methionine = 2'-O-methyluridine(2552) in 23S rRNA + S-adenosyl-L-homocysteine + H(+). Functionally, specifically methylates the uridine in position 2552 of 23S rRNA at the 2'-O position of the ribose in the fully assembled 50S ribosomal subunit. This Erythrobacter litoralis (strain HTCC2594) protein is Ribosomal RNA large subunit methyltransferase E.